A 249-amino-acid polypeptide reads, in one-letter code: Putative [LysW]-aminoadipate/[LysW]-glutamate kinase (249 aa).

Residues Arg-63 and Asn-166 each contribute to the substrate site.

It belongs to the acetylglutamate kinase family. LysZ subfamily.

Its subcellular location is the cytoplasm. It catalyses the reaction [amino-group carrier protein]-C-terminal-N-(1,4-dicarboxybutan-1-yl)-L-glutamine + ATP = [amino-group carrier protein]-C-terminal-N-(1-carboxy-5-phosphooxy-5-oxopentan-1-yl)-L-glutamine + ADP. The enzyme catalyses [amino-group carrier protein]-C-terminal-gamma-(L-glutamyl)-L-glutamate + ATP = [amino-group carrier protein]-C-terminal-gamma-(5-phospho-L-glutamyl)-L-glutamate + ADP. The protein operates within amino-acid biosynthesis; L-lysine biosynthesis via AAA pathway; L-lysine from L-alpha-aminoadipate (Thermus route): step 2/5. It participates in amino-acid biosynthesis; L-arginine biosynthesis. Its function is as follows. Involved in both the arginine and lysine biosynthetic pathways. Phosphorylates the LysW-bound precursors glutamate (for arginine biosynthesis), respectively alpha-aminoadipate (for lysine biosynthesis). In Pyrococcus furiosus (strain ATCC 43587 / DSM 3638 / JCM 8422 / Vc1), this protein is Putative [LysW]-aminoadipate/[LysW]-glutamate kinase.